Consider the following 317-residue polypeptide: Ribosomal RNA small subunit methyltransferase H (317 aa).

S-adenosyl-L-methionine-binding positions include 37–39 (AGH), D56, F85, D106, and Q113.

Belongs to the methyltransferase superfamily. RsmH family.

The protein resides in the cytoplasm. The catalysed reaction is cytidine(1402) in 16S rRNA + S-adenosyl-L-methionine = N(4)-methylcytidine(1402) in 16S rRNA + S-adenosyl-L-homocysteine + H(+). Specifically methylates the N4 position of cytidine in position 1402 (C1402) of 16S rRNA. The chain is Ribosomal RNA small subunit methyltransferase H from Lactococcus lactis subsp. cremoris (strain SK11).